The sequence spans 421 residues: F-box/kelch-repeat protein At1g26930 (421 aa).

A disordered region spans residues 54–73; the sequence is TDSSEGEDNGSSSDSGTLIP. Residues 70-117 form the F-box domain; sequence TLIPGMNRDDSLSCLIRCSRADYCSIASVNRSLRSLIRSGEIYRLRRL. Kelch repeat units follow at residues 114 to 167, 169 to 212, 213 to 260, 261 to 312, and 320 to 366; these read LRRL…LAVG, DLLV…SYGE, IAVL…FMDG, KFYV…MSAA, and AVVN…GLAF.

The sequence is that of F-box/kelch-repeat protein At1g26930 from Arabidopsis thaliana (Mouse-ear cress).